The sequence spans 545 residues: Cryptochrome-1 (545 aa).

In terms of domain architecture, Photolyase/cryptochrome alpha/beta spans V3 to L138. Residues R236, S264, S266, Q307, H374, D406–D408, C412, and N415 each bind FAD.

This sequence belongs to the DNA photolyase class-1 family. As to quaternary structure, interacts with tim and per; promoted by light conditions. Requires FAD as cofactor.

Its subcellular location is the cytoplasm. The protein localises to the perinuclear region. It is found in the nucleus. Functionally, blue light-dependent regulator that is the input of the circadian feedback loop. Has no photolyase activity for cyclobutane pyrimidine dimers or 6-4 photoproducts. Regulation of expression by light suggests a role in photoreception for locomotor activity rhythms. Functions, together with per, as a transcriptional repressor required for the oscillation of peripheral circadian clocks and for the correct specification of clock cells. Genes directly activated by the transcription factors Clock (Clk) and cycle (cyc) are repressed by cry. In Aedes aegypti (Yellowfever mosquito), this protein is Cryptochrome-1.